A 223-amino-acid polypeptide reads, in one-letter code: UPF0441 protein KPN78578_33850 (223 aa).

Positions serine 165–glycine 223 are disordered. 2 stretches are compositionally biased toward low complexity: residues valine 177–threonine 193 and arginine 209–glycine 223.

Belongs to the UPF0441 family.

The chain is UPF0441 protein KPN78578_33850 from Klebsiella pneumoniae subsp. pneumoniae (strain ATCC 700721 / MGH 78578).